Reading from the N-terminus, the 217-residue chain is Adenylate kinase (217 aa).

10–15 serves as a coordination point for ATP; the sequence is GAGKGT. An NMP region spans residues 30–59; sequence STGDIFRSNVSQGTPLGVQAKRYMDAGELV. AMP-binding positions include T31, R36, 57–59, 85–88, and Q92; these read ELV and GFPR. Residues 126–163 are LID; the sequence is GRRTCRGCGKVWHVEFDAPSQEGRCDRCGAELFQRDDD. Residue R127 participates in ATP binding. Residues C130, C133, C150, and C153 each coordinate Zn(2+). R160 and R171 together coordinate AMP. G199 contributes to the ATP binding site.

It belongs to the adenylate kinase family. In terms of assembly, monomer.

The protein localises to the cytoplasm. The enzyme catalyses AMP + ATP = 2 ADP. It participates in purine metabolism; AMP biosynthesis via salvage pathway; AMP from ADP: step 1/1. Catalyzes the reversible transfer of the terminal phosphate group between ATP and AMP. Plays an important role in cellular energy homeostasis and in adenine nucleotide metabolism. The chain is Adenylate kinase from Salinispora tropica (strain ATCC BAA-916 / DSM 44818 / JCM 13857 / NBRC 105044 / CNB-440).